Consider the following 346-residue polypeptide: Large ribosomal subunit protein uL10 (346 aa).

Residues 307–346 form a disordered region; that stretch reads AAAVAKEPEKKEEVKEEEEEEEEEDHSEEDGMAGLGSLFG. Acidic residues predominate over residues 321–337; it reads KEEEEEEEEEDHSEEDG.

This sequence belongs to the universal ribosomal protein uL10 family. As to quaternary structure, part of the 50S ribosomal subunit. Forms part of the ribosomal stalk which helps the ribosome interact with GTP-bound translation factors. Forms both a pentameric L10(L12)2(L12)2 and heptameric L10(L12)2(L12)2(L12)2 complex, where L10 forms an elongated spine to which the L12 dimers bind in a sequential fashion. The proportion of heptameric complexes increases during cell growth.

In terms of biological role, forms part of the ribosomal stalk, playing a central role in the interaction of the ribosome with GTP-bound translation factors. The sequence is that of Large ribosomal subunit protein uL10 from Methanosarcina barkeri (strain Fusaro / DSM 804).